We begin with the raw amino-acid sequence, 370 residues long: Popeye domain-containing 2 (370 aa).

The next 2 helical transmembrane spans lie at 51 to 71 and 78 to 98; these read ALYI…WGWL and VFIW…HLIF. A disordered region spans residues 275-349; sequence PSPPGSEGGS…SGEDSTSLIL (75 aa). The span at 283–294 shows a compositional bias: low complexity; it reads GSASSPPRGSLG. Polar residues-rich tracts occupy residues 307 to 319 and 330 to 347; these read NPGS…QPDQ and QHWS…STSL.

This sequence belongs to the popeye family. Expressed in the heart and, slightly, in skeletal muscle.

The protein resides in the membrane. It localises to the cell membrane. Its subcellular location is the sarcolemma. In terms of biological role, important for striated muscle differentiation and cardiac morphogenesis. Is also required for cardiac conduction system development, plays a regulatory function in heart rate dynamics mediated, at least in part, through cAMP-binding. The sequence is that of Popeye domain-containing 2 from Danio rerio (Zebrafish).